Consider the following 449-residue polypeptide: Type 3 secretion system ATPase (449 aa).

178-183 (GCGKTT) contributes to the ATP binding site.

It belongs to the ATPase alpha/beta chains family. T3SS ATPase subfamily. In terms of assembly, the core secretion machinery of the T3SS is composed of approximately 20 different proteins, including cytoplasmic components, a base, an export apparatus and a needle. This subunit is part of the cytosolic complex. Forms homododecamers.

The protein localises to the cytoplasm. The enzyme catalyses ATP + H2O + cellular proteinSide 1 = ADP + phosphate + cellular proteinSide 2.. Functionally, ATPase component of the type III secretion system (T3SS), also called injectisome, which is used to inject bacterial effector proteins into eukaryotic host cells. Acts as a molecular motor to provide the energy that is required for the export of proteins. Required for type III secretion apparatus (T3SA) formation, proper protein secretion, host cell invasion and virulence. May play a critical role in T3SS substrate recognition, disassembly of the effector/chaperone complex and unfolding of the effector in an ATP-dependent manner prior to secretion. This is Type 3 secretion system ATPase from Pseudomonas syringae pv. tomato (strain ATCC BAA-871 / DC3000).